A 192-amino-acid chain; its full sequence is uncharacterized protein (192 aa).

The first 17 residues, 1-17 (MFLHLILLAGLAPVVYL), serve as a signal peptide directing secretion.

This is an uncharacterized protein from Caenorhabditis elegans.